The primary structure comprises 443 residues: Xaa-Pro dipeptidase (443 aa).

Residues aspartate 246, aspartate 257, histidine 339, glutamate 384, and glutamate 423 each contribute to the Mn(2+) site.

This sequence belongs to the peptidase M24B family. Bacterial-type prolidase subfamily. Requires Mn(2+) as cofactor.

The catalysed reaction is Xaa-L-Pro dipeptide + H2O = an L-alpha-amino acid + L-proline. Its function is as follows. Splits dipeptides with a prolyl residue in the C-terminal position. This is Xaa-Pro dipeptidase from Escherichia coli O157:H7.